The following is a 280-amino-acid chain: MLFLEGLMQYSFLQKALITSVTVGIVSGVIGSFIILRGMSLMGDAISHAVLPGVAISYMMGMNFFIGAATFGIAAALGIGFVNQKSRIKNDTAIGIVFSAFFALGIILISFAKSSTDLYHILFGNVLAVRSSDMWMTIIIAIIVISLVALFYKEFLVSSFDPVMAEAYGLNVKFLHYFLMLLLTLVTVSALQTVGIILVVAMLITPAATAYLLTNKLSKMIVLASTFGAVSAIIGLYFSYIFNLASGAAMVLVATIIFFIAFLFAPKQGLLFSKKREVIE.

The next 9 helical transmembrane spans lie at 16 to 36 (ALIT…FIIL), 41 to 61 (LMGD…YMMG), 62 to 82 (MNFF…IGFV), 92 to 112 (TAIG…ISFA), 137 to 157 (TIII…EFLV), 168 to 188 (YGLN…LVTV), 193 to 213 (TVGI…AYLL), 221 to 241 (IVLA…FSYI), and 244 to 264 (LASG…AFLF).

The protein belongs to the ABC-3 integral membrane protein family.

Its subcellular location is the cell membrane. This protein is probably a component of a manganese permease, a binding protein-dependent, ATP-driven transport system. The protein is Manganese transport system membrane protein MntC (mntC) of Listeria monocytogenes serovar 1/2a (strain ATCC BAA-679 / EGD-e).